Reading from the N-terminus, the 622-residue chain is Mitochondrial distribution and morphology protein 34 (622 aa).

In terms of domain architecture, SMP-LTD spans 1–204 (MSFKVNWNSL…LPTLIHQLSL (204 aa)). Disordered stretches follow at residues 362–399 (YSNK…PSEL) and 568–592 (FDGG…TRNE). Basic residues predominate over residues 370–384 (KPKRRRIKVHKKNKS). Polar residues predominate over residues 390–399 (TTTTSKPSEL). Positions 571–583 (GKNNNTNDNNSKN) are enriched in low complexity.

It belongs to the MDM34 family. As to quaternary structure, component of the ER-mitochondria encounter structure (ERMES) or MDM complex, composed of MMM1, MDM10, MDM12 and MDM34.

It is found in the mitochondrion outer membrane. Its function is as follows. Component of the ERMES/MDM complex, which serves as a molecular tether to connect the endoplasmic reticulum (ER) and mitochondria. Components of this complex are involved in the control of mitochondrial shape and protein biogenesis, and function in nonvesicular lipid trafficking between the ER and mitochondria. MDM34 is required for the interaction of the ER-resident membrane protein MMM1 and the outer mitochondrial membrane-resident beta-barrel protein MDM10. This chain is Mitochondrial distribution and morphology protein 34, found in Candida dubliniensis (strain CD36 / ATCC MYA-646 / CBS 7987 / NCPF 3949 / NRRL Y-17841) (Yeast).